The sequence spans 156 residues: D-aminoacyl-tRNA deacylase (156 aa).

The short motif at 142-143 (GP) is the Gly-cisPro motif, important for rejection of L-amino acids element.

The protein belongs to the DTD family. Homodimer.

The protein resides in the cytoplasm. It carries out the reaction glycyl-tRNA(Ala) + H2O = tRNA(Ala) + glycine + H(+). The enzyme catalyses a D-aminoacyl-tRNA + H2O = a tRNA + a D-alpha-amino acid + H(+). Its function is as follows. An aminoacyl-tRNA editing enzyme that deacylates mischarged D-aminoacyl-tRNAs. Also deacylates mischarged glycyl-tRNA(Ala), protecting cells against glycine mischarging by AlaRS. Acts via tRNA-based rather than protein-based catalysis; rejects L-amino acids rather than detecting D-amino acids in the active site. By recycling D-aminoacyl-tRNA to D-amino acids and free tRNA molecules, this enzyme counteracts the toxicity associated with the formation of D-aminoacyl-tRNA entities in vivo and helps enforce protein L-homochirality. This chain is D-aminoacyl-tRNA deacylase, found in Cupriavidus metallidurans (strain ATCC 43123 / DSM 2839 / NBRC 102507 / CH34) (Ralstonia metallidurans).